A 506-amino-acid polypeptide reads, in one-letter code: Anaerobic nitric oxide reductase transcription regulator NorR (506 aa).

D57 bears the 4-aspartylphosphate mark. The Sigma-54 factor interaction domain maps to M187 to V416. ATP is bound by residues G215–E222 and A278–E287. Residues W481–K500 constitute a DNA-binding region (H-T-H motif).

It participates in nitrogen metabolism; nitric oxide reduction. Required for the expression of anaerobic nitric oxide (NO) reductase, acts as a transcriptional activator for at least the norVW operon. Activation also requires sigma-54. The sequence is that of Anaerobic nitric oxide reductase transcription regulator NorR from Salmonella dublin (strain CT_02021853).